Here is a 337-residue protein sequence, read N- to C-terminus: Anthranilate phosphoribosyltransferase (337 aa).

5-phospho-alpha-D-ribose 1-diphosphate contacts are provided by residues Gly81, 84–85, Ser89, 91–94, 109–117, and Ala121; these read GD, NVST, and KHGNRALSS. Gly81 lines the anthranilate pocket. A Mg(2+)-binding site is contributed by Ser93. Position 112 (Asn112) interacts with anthranilate. Residue Arg167 coordinates anthranilate. Mg(2+) contacts are provided by Asp226 and Glu227.

The protein belongs to the anthranilate phosphoribosyltransferase family. As to quaternary structure, homodimer. It depends on Mg(2+) as a cofactor.

It carries out the reaction N-(5-phospho-beta-D-ribosyl)anthranilate + diphosphate = 5-phospho-alpha-D-ribose 1-diphosphate + anthranilate. It participates in amino-acid biosynthesis; L-tryptophan biosynthesis; L-tryptophan from chorismate: step 2/5. In terms of biological role, catalyzes the transfer of the phosphoribosyl group of 5-phosphorylribose-1-pyrophosphate (PRPP) to anthranilate to yield N-(5'-phosphoribosyl)-anthranilate (PRA). This chain is Anthranilate phosphoribosyltransferase, found in Bradyrhizobium sp. (strain ORS 278).